A 496-amino-acid chain; its full sequence is Solute carrier family 2, facilitated glucose transporter member 3 (496 aa).

Topologically, residues 1–10 are cytoplasmic; the sequence is MGTQKVTPAL. The chain crosses the membrane as a helical span at residues 11 to 32; the sequence is IFAITVATIGSFQFGYNTGVIN. The Extracellular portion of the chain corresponds to 33–64; that stretch reads APEKIIKEFINKTLTDKGNAPPSEVLLTSLWS. Asn43 carries an N-linked (GlcNAc...) asparagine glycan. A helical membrane pass occupies residues 65–85; that stretch reads LSVAIFSVGGMIGSFSVGLFV. Topologically, residues 86-90 are cytoplasmic; that stretch reads NRFGR. Residues 91–111 traverse the membrane as a helical segment; the sequence is RNSMLIVNLLAVTGGCFMGLC. The Extracellular portion of the chain corresponds to 112–118; it reads KVAKSVE. Residues 119-142 traverse the membrane as a helical segment; it reads MLILGRLIIGLFCGLCTGFVPMYI. Residues 143-153 lie on the Cytoplasmic side of the membrane; the sequence is GEISPTALRGA. A helical transmembrane segment spans residues 154 to 174; the sequence is FGTLNQLGIVVGILVAQIFGL. Gln159 contributes to the D-glucose binding site. The Extracellular portion of the chain corresponds to 175-183; that stretch reads EFILGSEEL. Residues 184–204 form a helical membrane-spanning segment; that stretch reads WPLLLGFTILPTILQSAALPF. At 205-269 the chain is on the cytoplasmic side; it reads CPESPRFLLI…LFRVSSYRQP (65 aa). Phosphothreonine is present on Thr232. The helical transmembrane segment at 270–290 threads the bilayer; it reads IIISIVLQLSQQLSGINAVFY. The important for selectivity against fructose stretch occupies residues 277–279; the sequence is QLS. Residues 280–281 and Asn286 each bind D-glucose; that span reads QQ. Over 291–304 the chain is Extracellular; it reads YSTGIFKDAGVQEP. The chain crosses the membrane as a helical span at residues 305 to 325; the sequence is IYATIGAGVVNTIFTVVSLFL. Position 315 (Asn315) interacts with D-glucose. At 326-331 the chain is on the cytoplasmic side; that stretch reads VERAGR. The chain crosses the membrane as a helical span at residues 332–352; it reads RTLHMIGLGGMAFCSTLMTVS. The Extracellular portion of the chain corresponds to 353–363; sequence LLLKDNYNGMS. Residues 364–389 traverse the membrane as a helical segment; it reads FVCIGAILVFVAFFEIGPGPIPWFIV. D-glucose contacts are provided by Glu378 and Trp386. The Cytoplasmic portion of the chain corresponds to 390–399; the sequence is AELFSQGPRP. A helical membrane pass occupies residues 400-420; the sequence is AAMAVAGCSNWTSNFLVGLLF. Residues 421–429 lie on the Extracellular side of the membrane; it reads PSAAHYLGA. A helical membrane pass occupies residues 430 to 450; the sequence is YVFIIFTGFLITFLAFTFFKV. Residues 451 to 496 are Cytoplasmic-facing; sequence PETRGRTFEDITRAFEGQAHGADRSGKDGVMEVNSIEPAKETTTNV. Residues Ser475 and Ser485 each carry the phosphoserine modification. Thr492 bears the Phosphothreonine mark.

The protein belongs to the major facilitator superfamily. Sugar transporter (TC 2.A.1.1) family. Glucose transporter subfamily. As to quaternary structure, interacts with SMIM43; the interaction may promote SLC2A3-mediated glucose transport to meet the energy needs of mesendoderm differentiation.

Its subcellular location is the cell membrane. It localises to the perikaryon. The protein localises to the cell projection. The enzyme catalyses D-glucose(out) = D-glucose(in). The catalysed reaction is D-galactose(in) = D-galactose(out). With respect to regulation, deoxyglucose transport is inhibited by D-glucose, D-galactose and maltose. Galactose transport is inhibited by D-glucose and maltose. Functionally, facilitative glucose transporter. Can also mediate the uptake of various other monosaccharides across the cell membrane. Mediates the uptake of glucose, 2-deoxyglucose, galactose, mannose, xylose and fucose, and probably also dehydroascorbate. Does not mediate fructose transport. Required for mesendoderm differentiation. This Pongo abelii (Sumatran orangutan) protein is Solute carrier family 2, facilitated glucose transporter member 3.